The primary structure comprises 283 residues: Phosphate import ATP-binding protein PstB 2 (283 aa).

Residues 36 to 278 form the ABC transporter domain; sequence LQVKQFNFYY…PKKKQTEDYI (243 aa). 69-76 provides a ligand contact to ATP; that stretch reads GPSGCGKS.

This sequence belongs to the ABC transporter superfamily. Phosphate importer (TC 3.A.1.7) family. As to quaternary structure, the complex is composed of two ATP-binding proteins (PstB), two transmembrane proteins (PstC and PstA) and a solute-binding protein (PstS).

Its subcellular location is the cell inner membrane. The catalysed reaction is phosphate(out) + ATP + H2O = ADP + 2 phosphate(in) + H(+). Part of the ABC transporter complex PstSACB involved in phosphate import. Responsible for energy coupling to the transport system. The chain is Phosphate import ATP-binding protein PstB 2 from Nitrosococcus oceani (strain ATCC 19707 / BCRC 17464 / JCM 30415 / NCIMB 11848 / C-107).